Consider the following 481-residue polypeptide: Cytochrome c oxidase subunit 1 (481 aa).

A helical membrane pass occupies residues 22 to 42 (ISYLWLAYWFGMIGFYMSVLI). Ca(2+)-binding residues include Glu45 and Gly50. The next 8 membrane-spanning stretches (helical) occupy residues 64–84 (LLFT…GLFG), 109–129 (SLLF…LEIG), 151–171 (FIIF…VNFI), 194–214 (IVLT…VFLM), 240–260 (LFWF…FGII), 278–298 (MILA…TSYV), 309–329 (YFTT…FNWV), and 343–363 (LVLF…TGVV). His69 is a Fe(II)-heme a binding site. His246 contributes to the Cu cation binding site. A cross-link (1'-histidyl-3'-tyrosine (His-Tyr)) is located at residues 246–250 (HPEVY). Residue Tyr250 participates in O2 binding. Mg(2+) is bound by residues His374 and Asp375. His382 lines the heme a3 pocket. Helical transmembrane passes span 382–402 (HFHF…IIYI) and 420–440 (IAPI…FTGF). His384 contacts Fe(II)-heme a. Position 448 (Pro448) interacts with Ca(2+). The chain crosses the membrane as a helical span at residues 459-479 (FICTLGATMMLVLKLAILFII).

This sequence belongs to the heme-copper respiratory oxidase family. In terms of assembly, component of the cytochrome c oxidase (complex IV, CIV), a multisubunit enzyme composed of a catalytic core of 3 subunits and several supernumerary subunits. The complex exists as a monomer or a dimer and forms supercomplexes (SCs) in the inner mitochondrial membrane with ubiquinol-cytochrome c oxidoreductase (cytochrome b-c1 complex, complex III, CIII). Heme serves as cofactor. It depends on Cu cation as a cofactor.

It localises to the mitochondrion inner membrane. The enzyme catalyses 4 Fe(II)-[cytochrome c] + O2 + 8 H(+)(in) = 4 Fe(III)-[cytochrome c] + 2 H2O + 4 H(+)(out). The protein operates within energy metabolism; oxidative phosphorylation. Functionally, component of the cytochrome c oxidase, the last enzyme in the mitochondrial electron transport chain which drives oxidative phosphorylation. The respiratory chain contains 3 multisubunit complexes succinate dehydrogenase (complex II, CII), ubiquinol-cytochrome c oxidoreductase (cytochrome b-c1 complex, complex III, CIII) and cytochrome c oxidase (complex IV, CIV), that cooperate to transfer electrons derived from NADH and succinate to molecular oxygen, creating an electrochemical gradient over the inner membrane that drives transmembrane transport and the ATP synthase. Cytochrome c oxidase is the component of the respiratory chain that catalyzes the reduction of oxygen to water. Electrons originating from reduced cytochrome c in the intermembrane space (IMS) are transferred via the dinuclear copper A center (CU(A)) of subunit 2 and heme A of subunit 1 to the active site in subunit 1, a binuclear center (BNC) formed by heme A3 and copper B (CU(B)). The BNC reduces molecular oxygen to 2 water molecules using 4 electrons from cytochrome c in the IMS and 4 protons from the mitochondrial matrix. The chain is Cytochrome c oxidase subunit 1 (MT-CO1) from Theileria parva (East coast fever infection agent).